Reading from the N-terminus, the 428-residue chain is Tyrosine--tRNA ligase (428 aa).

Tyrosine 41 is an L-tyrosine binding site. The 'HIGH' region signature appears at 46–55 (PTADSLHLGH). 2 residues coordinate L-tyrosine: tyrosine 179 and glutamine 183. The 'KMSKS' region motif lies at 239 to 243 (KFGKT). Lysine 242 lines the ATP pocket. An S4 RNA-binding domain is found at 361–418 (ADLMQALVDSELQPSRGQARKTIASNAITINGEKQSDPEYTFSDSDRLFGRYTLLRRG).

Belongs to the class-I aminoacyl-tRNA synthetase family. TyrS type 1 subfamily. In terms of assembly, homodimer.

Its subcellular location is the cytoplasm. It catalyses the reaction tRNA(Tyr) + L-tyrosine + ATP = L-tyrosyl-tRNA(Tyr) + AMP + diphosphate + H(+). In terms of biological role, catalyzes the attachment of tyrosine to tRNA(Tyr) in a two-step reaction: tyrosine is first activated by ATP to form Tyr-AMP and then transferred to the acceptor end of tRNA(Tyr). The sequence is that of Tyrosine--tRNA ligase from Cronobacter sakazakii (strain ATCC BAA-894) (Enterobacter sakazakii).